The primary structure comprises 119 residues: Ribonuclease P protein component (119 aa).

The protein belongs to the RnpA family. As to quaternary structure, consists of a catalytic RNA component (M1 or rnpB) and a protein subunit.

The enzyme catalyses Endonucleolytic cleavage of RNA, removing 5'-extranucleotides from tRNA precursor.. RNaseP catalyzes the removal of the 5'-leader sequence from pre-tRNA to produce the mature 5'-terminus. It can also cleave other RNA substrates such as 4.5S RNA. The protein component plays an auxiliary but essential role in vivo by binding to the 5'-leader sequence and broadening the substrate specificity of the ribozyme. This chain is Ribonuclease P protein component, found in Streptococcus mutans serotype c (strain ATCC 700610 / UA159).